The sequence spans 273 residues: Large ribosomal subunit protein uL2 (273 aa).

2 disordered regions span residues 31–50 and 221–273; these read APLLDSKSKTGGRNNLGRIT and RGTA…RRGK. A compositionally biased stretch (basic residues) spans 253–273; that stretch reads KGKKTRHNKRTDKYIVRRRGK.

It belongs to the universal ribosomal protein uL2 family. In terms of assembly, part of the 50S ribosomal subunit. Forms a bridge to the 30S subunit in the 70S ribosome.

One of the primary rRNA binding proteins. Required for association of the 30S and 50S subunits to form the 70S ribosome, for tRNA binding and peptide bond formation. It has been suggested to have peptidyltransferase activity; this is somewhat controversial. Makes several contacts with the 16S rRNA in the 70S ribosome. This Actinobacillus pleuropneumoniae serotype 7 (strain AP76) protein is Large ribosomal subunit protein uL2.